The sequence spans 20 residues: Antifungal protein 2 large subunit (20 aa).

Residues 1–20 (PEDPQRRYQEXQREXRXQQE) are disordered.

Heterodimer of a large and a small subunit.

In terms of biological role, possesses antifungal activity against P.infestans but not F.graminearum. This Malva parviflora (Little mallow) protein is Antifungal protein 2 large subunit.